A 78-amino-acid polypeptide reads, in one-letter code: Acyl carrier protein (78 aa).

Residues 2 to 77 (SSIEERVKKI…LAIDYINANL (76 aa)) form the Carrier domain. At serine 37 the chain carries O-(pantetheine 4'-phosphoryl)serine.

This sequence belongs to the acyl carrier protein (ACP) family. 4'-phosphopantetheine is transferred from CoA to a specific serine of apo-ACP by AcpS. This modification is essential for activity because fatty acids are bound in thioester linkage to the sulfhydryl of the prosthetic group.

The protein resides in the cytoplasm. The protein operates within lipid metabolism; fatty acid biosynthesis. Its function is as follows. Carrier of the growing fatty acid chain in fatty acid biosynthesis. This Cellvibrio japonicus (strain Ueda107) (Pseudomonas fluorescens subsp. cellulosa) protein is Acyl carrier protein.